A 64-amino-acid polypeptide reads, in one-letter code: Alpha-toxin Amm5 (64 aa).

The region spanning 2–64 is the LCN-type CS-alpha/beta domain; sequence KDGYIIDDLN…VSIKEKGRCN (63 aa). 4 disulfides stabilise this stretch: cysteine 12–cysteine 63, cysteine 16–cysteine 36, cysteine 22–cysteine 46, and cysteine 26–cysteine 48. Asparagine 64 is modified (asparagine amide).

In terms of tissue distribution, expressed by the venom gland.

It is found in the secreted. Alpha toxins bind voltage-independently at site-3 of sodium channels (Nav) and inhibit the inactivation of the activated channels, thereby blocking neuronal transmission. The polypeptide is Alpha-toxin Amm5 (Androctonus mauritanicus mauritanicus (Scorpion)).